The following is a 295-amino-acid chain: Aspartate carbamoyltransferase catalytic subunit (295 aa).

Positions 49 and 50 each coordinate carbamoyl phosphate. An L-aspartate-binding site is contributed by Lys-77. 3 residues coordinate carbamoyl phosphate: Arg-99, His-127, and Gln-130. L-aspartate-binding residues include Arg-161 and Arg-212. Residues Gly-251 and Pro-252 each contribute to the carbamoyl phosphate site.

Belongs to the aspartate/ornithine carbamoyltransferase superfamily. ATCase family. Heterododecamer (2C3:3R2) of six catalytic PyrB chains organized as two trimers (C3), and six regulatory PyrI chains organized as three dimers (R2).

It catalyses the reaction carbamoyl phosphate + L-aspartate = N-carbamoyl-L-aspartate + phosphate + H(+). Its pathway is pyrimidine metabolism; UMP biosynthesis via de novo pathway; (S)-dihydroorotate from bicarbonate: step 2/3. Catalyzes the condensation of carbamoyl phosphate and aspartate to form carbamoyl aspartate and inorganic phosphate, the committed step in the de novo pyrimidine nucleotide biosynthesis pathway. The protein is Aspartate carbamoyltransferase catalytic subunit of Campylobacter jejuni subsp. jejuni serotype O:2 (strain ATCC 700819 / NCTC 11168).